Reading from the N-terminus, the 100-residue chain is Urease subunit gamma (100 aa).

Belongs to the urease gamma subunit family. In terms of assembly, heterotrimer of UreA (gamma), UreB (beta) and UreC (alpha) subunits. Three heterotrimers associate to form the active enzyme.

It is found in the cytoplasm. The catalysed reaction is urea + 2 H2O + H(+) = hydrogencarbonate + 2 NH4(+). The protein operates within nitrogen metabolism; urea degradation; CO(2) and NH(3) from urea (urease route): step 1/1. The polypeptide is Urease subunit gamma (Rhizobium rhizogenes (strain K84 / ATCC BAA-868) (Agrobacterium radiobacter)).